The chain runs to 739 residues: Lysyl oxidase homolog 3A (739 aa).

The N-terminal stretch at 1-25 (MLRSELRDMVVAMVLWGILLPFCLS) is a signal peptide. SRCR domains follow at residues 38-139 (FRLA…VICK), 166-272 (LRPL…VSCV), 293-393 (MRLK…VICN), and 403-511 (MRLT…VICS). Disulfide bonds link C64-C128, C77-C138, C108-C118, C196-C261, C209-C271, C238-C248, C318-C382, C331-C392, C362-C372, C433-C497, C446-C510, and C479-C489. A glycan (N-linked (GlcNAc...) asparagine) is linked at N256. N468 is a glycosylation site (N-linked (GlcNAc...) asparagine). N611 carries an N-linked (GlcNAc...) asparagine glycan. Residues 620 to 656 (KASFCLEDTECHEGVSKRYECANFGEQGITVGCWDLY) constitute a cross-link (lysine tyrosylquinone (Lys-Tyr)). 2',4',5'-topaquinone is present on Y656.

The protein belongs to the lysyl oxidase family. It depends on Cu cation as a cofactor. Lysine tyrosylquinone residue is required as a cofactor. Post-translationally, the lysine tyrosylquinone cross-link (LTQ) is generated by condensation of the epsilon-amino group of a lysine with a topaquinone produced by oxidation of tyrosine.

It localises to the secreted. The protein localises to the extracellular space. The protein resides in the cytoplasm. Its subcellular location is the nucleus. The enzyme catalyses L-lysyl-[protein] + O2 + H2O = (S)-2-amino-6-oxohexanoyl-[protein] + H2O2 + NH4(+). The catalysed reaction is N(6)-acetyl-L-lysyl-[protein] + O2 + H2O = acetamide + (S)-2-amino-6-oxohexanoyl-[protein] + H2O2. Functionally, protein-lysine 6-oxidase that mediates the oxidation of peptidyl lysine residues to allysine in target proteins. Catalyzes the post-translational oxidative deamination of peptidyl lysine residues in precursors of elastin and different types of collagens, a prerequisite in the formation of cross-links between collagens and elastin. Can mediate oxidation of lysine residues that are acetylated. Also able to catalyze deacetylation of lysine residues. In Danio rerio (Zebrafish), this protein is Lysyl oxidase homolog 3A.